Here is a 337-residue protein sequence, read N- to C-terminus: ATP-dependent 6-phosphofructokinase (337 aa).

G11 contacts ATP. An ADP-binding site is contributed by 21–25; that stretch reads RAVVR. ATP is bound by residues 72–73 and 102–105; these read RY and GDGS. Mg(2+) is bound at residue D103. Position 125-127 (125-127) interacts with substrate; that stretch reads TID. The active-site Proton acceptor is the D127. R154 is a binding site for ADP. Residues R162 and 169 to 171 contribute to the substrate site; that span reads MGR. ADP-binding positions include 185-187 and 214-216; these read GAD and KNH. Residues E223, R245, and 251–254 contribute to the substrate site; that span reads HILR.

The protein belongs to the phosphofructokinase type A (PFKA) family. ATP-dependent PFK group I subfamily. Prokaryotic clade 'B1' sub-subfamily. As to quaternary structure, homotetramer. The cofactor is Mg(2+).

The protein resides in the cytoplasm. It carries out the reaction beta-D-fructose 6-phosphate + ATP = beta-D-fructose 1,6-bisphosphate + ADP + H(+). It functions in the pathway carbohydrate degradation; glycolysis; D-glyceraldehyde 3-phosphate and glycerone phosphate from D-glucose: step 3/4. With respect to regulation, allosterically activated by ADP and other diphosphonucleosides, and allosterically inhibited by phosphoenolpyruvate. Its function is as follows. Catalyzes the phosphorylation of D-fructose 6-phosphate to fructose 1,6-bisphosphate by ATP, the first committing step of glycolysis. The protein is ATP-dependent 6-phosphofructokinase of Streptococcus mutans serotype c (strain ATCC 700610 / UA159).